The primary structure comprises 439 residues: Dolichyl-diphosphooligosaccharide--protein glycosyltransferase 48 kDa subunit (439 aa).

The first 26 residues, 1–26 (MATRAARVWSGWWLLLLPLLGLAGAS), serve as a signal peptide directing secretion. Topologically, residues 27-409 (GPRTLVLLDN…QYERFIPSAY (383 aa)) are lumenal. Residues 410–430 (PYYASAFSMMLGLFIFSVVFL) form a helical membrane-spanning segment. Residues 431–439 (HMKEKEKSD) lie on the Cytoplasmic side of the membrane.

The protein belongs to the DDOST 48 kDa subunit family. Component of the oligosaccharyltransferase (OST) complex. OST exists in two different complex forms which contain common core subunits RPN1, RPN2, OST48, OST4, DAD1 and TMEM258, either STT3A or STT3B as catalytic subunits, and form-specific accessory subunits. STT3A complex assembly occurs through the formation of 3 subcomplexes. Subcomplex 1 contains RPN1 and TMEM258, subcomplex 2 contains the STT3A-specific subunits STT3A, DC2/OSTC, and KCP2 as well as the core subunit OST4, and subcomplex 3 contains RPN2, DAD1, and OST48. The STT3A complex can form stable complexes with the Sec61 complex or with both the Sec61 and TRAP complexes. Interacts with SMIM22.

The protein resides in the endoplasmic reticulum membrane. The protein operates within protein modification; protein glycosylation. Functionally, subunit of the oligosaccharyl transferase (OST) complex that catalyzes the initial transfer of a defined glycan (Glc(3)Man(9)GlcNAc(2) in eukaryotes) from the lipid carrier dolichol-pyrophosphate to an asparagine residue within an Asn-X-Ser/Thr consensus motif in nascent polypeptide chains, the first step in protein N-glycosylation. N-glycosylation occurs cotranslationally and the complex associates with the Sec61 complex at the channel-forming translocon complex that mediates protein translocation across the endoplasmic reticulum (ER). All subunits are required for a maximal enzyme activity. Required for the assembly of both SST3A- and SS3B-containing OST complexes. This chain is Dolichyl-diphosphooligosaccharide--protein glycosyltransferase 48 kDa subunit, found in Bos taurus (Bovine).